A 298-amino-acid chain; its full sequence is Protease HtpX homolog (298 aa).

The next 2 helical transmembrane spans lie at 14-34 (VVLL…AGYL) and 39-59 (YAMG…SMIF). Residue His-143 coordinates Zn(2+). The active site involves Glu-144. His-147 serves as a coordination point for Zn(2+). The next 2 helical transmembrane spans lie at 158–178 (IAVA…RMLW) and 197–217 (IITL…ASLI). Glu-226 serves as a coordination point for Zn(2+).

The protein belongs to the peptidase M48B family. The cofactor is Zn(2+).

It is found in the cell membrane. The polypeptide is Protease HtpX homolog (Streptococcus pyogenes serotype M3 (strain SSI-1)).